The sequence spans 188 residues: Photosystem I assembly protein Ycf4 (188 aa).

2 helical membrane passes run 26–48 (FFWA…SSYF) and 63–85 (FIPQ…GYLW).

This sequence belongs to the Ycf4 family.

Its subcellular location is the cellular thylakoid membrane. Its function is as follows. Seems to be required for the assembly of the photosystem I complex. This is Photosystem I assembly protein Ycf4 from Synechocystis sp. (strain ATCC 27184 / PCC 6803 / Kazusa).